A 494-amino-acid polypeptide reads, in one-letter code: MFS-type transporter lnaF (494 aa).

The segment at 1–51 (MTYDPENAMGEARADAPVEAEKEHEATQTTVKESTLGYDNSSDPSRRDSYR) is disordered. Basic and acidic residues predominate over residues 12-26 (ARADAPVEAEKEHEA). N40, N58, and N68 each carry an N-linked (GlcNAc...) asparagine glycan. 10 helical membrane-spanning segments follow: residues 105 to 125 (SLLI…DMFS), 128 to 148 (AGLL…TLAL), 156 to 176 (MLWY…GEYP), 203 to 223 (TLMA…CLIA), 228 to 248 (LPVT…IIMV), 290 to 310 (LAFF…STII), 323 to 343 (AIWQ…GAWL), 354 to 374 (ILGF…FPHL), 383 to 403 (VLYG…IGLI), and 446 to 466 (STFY…WFLP).

The protein belongs to the major facilitator superfamily. Sugar transporter (TC 2.A.1.1) family.

The protein localises to the cell membrane. In terms of biological role, MFS-type transporter; part of the lna gene cluster that mediates the biosynthesis of diastereomeric piperazines. Lna and lnb clusters encode sets of enzymes that produce overlapping sets of previously undescribed metabolites such as piperazinomycin-like metabolites or morpholine. The lna and lnb biosynthetic pathways appear to be part of a signaling network that controls the formation of sclerotia, a resilient overwintering structure. May be involved in the secretion of the metabolites produced by the lna and lnb clusters. The protein is MFS-type transporter lnaF of Aspergillus flavus (strain ATCC 200026 / FGSC A1120 / IAM 13836 / NRRL 3357 / JCM 12722 / SRRC 167).